The primary structure comprises 504 residues: Anaerobic nitric oxide reductase transcription regulator NorR (504 aa).

Position 57 is a 4-aspartylphosphate (Asp57). In terms of domain architecture, Sigma-54 factor interaction spans Met187–Val416. Residues Gly215 to Glu222 and Ala278 to Glu287 each bind ATP. Residues Trp479–Lys498 constitute a DNA-binding region (H-T-H motif).

It participates in nitrogen metabolism; nitric oxide reduction. Functionally, required for the expression of anaerobic nitric oxide (NO) reductase, acts as a transcriptional activator for at least the norVW operon. Activation also requires sigma-54. This Shigella flexneri serotype 5b (strain 8401) protein is Anaerobic nitric oxide reductase transcription regulator NorR.